The chain runs to 547 residues: Chaperonin GroEL (547 aa).

Residues 30–33 (TLGP), K51, 87–91 (DGTTT), G415, and D496 contribute to the ATP site.

It belongs to the chaperonin (HSP60) family. Forms a cylinder of 14 subunits composed of two heptameric rings stacked back-to-back. Interacts with the co-chaperonin GroES.

The protein localises to the cytoplasm. It catalyses the reaction ATP + H2O + a folded polypeptide = ADP + phosphate + an unfolded polypeptide.. Its function is as follows. Together with its co-chaperonin GroES, plays an essential role in assisting protein folding. The GroEL-GroES system forms a nano-cage that allows encapsulation of the non-native substrate proteins and provides a physical environment optimized to promote and accelerate protein folding. The sequence is that of Chaperonin GroEL from Actinobacillus pleuropneumoniae serotype 7 (strain AP76).